A 529-amino-acid polypeptide reads, in one-letter code: Zinc metalloproteinase MspA (529 aa).

A signal peptide spans Met1–Ala24. The propeptide occupies Ala25 to Thr204. His365 serves as a coordination point for Zn(2+). Residue Glu366 is part of the active site. His369 and Glu389 together coordinate Zn(2+). His451 (proton donor) is an active-site residue.

The protein belongs to the peptidase M4 family. It depends on Zn(2+) as a cofactor.

In Legionella longbeachae, this protein is Zinc metalloproteinase MspA (mspA).